We begin with the raw amino-acid sequence, 261 residues long: Kallikrein 1-related peptidase b5 (261 aa).

A signal peptide spans 1–18; it reads MWFLILFLALSLGGIDAA. The propeptide at 19-24 is activation peptide; sequence PPVQSR. Residues 25-258 form the Peptidase S1 domain; that stretch reads IFGGFNCEKN…FNSWIKDTIA (234 aa). Disulfide bonds link cysteine 31–cysteine 173, cysteine 50–cysteine 66, cysteine 152–cysteine 219, cysteine 184–cysteine 198, and cysteine 209–cysteine 234. Histidine 65 acts as the Charge relay system in catalysis. N-linked (GlcNAc...) asparagine glycosylation occurs at asparagine 102. Aspartate 120 (charge relay system) is an active-site residue. The active-site Charge relay system is the serine 213.

It belongs to the peptidase S1 family. Kallikrein subfamily.

The enzyme catalyses Preferential cleavage of Arg-|-Xaa bonds in small molecule substrates. Highly selective action to release kallidin (lysyl-bradykinin) from kininogen involves hydrolysis of Met-|-Xaa or Leu-|-Xaa.. Functionally, glandular kallikreins cleave Met-Lys and Arg-Ser bonds in kininogen to release Lys-bradykinin. This chain is Kallikrein 1-related peptidase b5 (Klk1b5), found in Mus musculus (Mouse).